A 266-amino-acid polypeptide reads, in one-letter code: Gap junction beta-4 protein (266 aa).

The stretch at 2–13 (NWAFLQGLLSGV) is an intramembrane region. The Cytoplasmic portion of the chain corresponds to 14-20 (NKYSTVL). A helical membrane pass occupies residues 21 to 40 (SRIWLSVVFIFRVLVYVVAA). Topologically, residues 41–73 (EEVWDDEQKDFVCNTKQPGCPNVCYDEFFPVSH) are extracellular. Disulfide bonds link Cys-53–Cys-175, Cys-60–Cys-169, and Cys-64–Cys-164. Residues 74 to 94 (VRLWALQLILVTCPSLLVVMH) form a helical membrane-spanning segment. Topologically, residues 95–130 (VAYREERERKHHLKHGPNAPSLYDNLSKKRGGLWWT) are cytoplasmic. Residues 131-151 (YLLSLIFKAAVDAGFLYIFHR) traverse the membrane as a helical segment. Residues 152-184 (LYKDYDMPRVVACSVEPCPHTVDCYISRPTEKK) are Extracellular-facing. Residues 185 to 205 (VFTYFMVTTAAICILLNLSEV) traverse the membrane as a helical segment. At 206–266 (FYLVGKRCME…SAPVDAGGYP (61 aa)) the chain is on the cytoplasmic side.

This sequence belongs to the connexin family. Beta-type (group I) subfamily. A hemichannel or connexon is composed of a hexamer of connexins. A functional gap junction is formed by the apposition of two hemichannels. Forms heteromeric channels with GJB2.

The protein resides in the cell membrane. It localises to the cell junction. Its subcellular location is the gap junction. Structural component of gap junctions. Gap junctions are dodecameric channels that connect the cytoplasm of adjoining cells. They are formed by the docking of two hexameric hemichannels, one from each cell membrane. Small molecules and ions diffuse from one cell to a neighboring cell via the central pore. The polypeptide is Gap junction beta-4 protein (GJB4) (Homo sapiens (Human)).